A 432-amino-acid chain; its full sequence is 3-phosphoshikimate 1-carboxyvinyltransferase (432 aa).

Positions 22, 23, and 27 each coordinate 3-phosphoshikimate. Position 22 (lysine 22) interacts with phosphoenolpyruvate. 2 residues coordinate phosphoenolpyruvate: glycine 96 and arginine 127. Residues serine 173, serine 174, glutamine 175, serine 201, aspartate 316, asparagine 339, and lysine 343 each coordinate 3-phosphoshikimate. Phosphoenolpyruvate is bound at residue glutamine 175. Aspartate 316 acts as the Proton acceptor in catalysis. Phosphoenolpyruvate is bound by residues arginine 347, arginine 391, and lysine 416.

It belongs to the EPSP synthase family. In terms of assembly, monomer.

It is found in the cytoplasm. It catalyses the reaction 3-phosphoshikimate + phosphoenolpyruvate = 5-O-(1-carboxyvinyl)-3-phosphoshikimate + phosphate. It participates in metabolic intermediate biosynthesis; chorismate biosynthesis; chorismate from D-erythrose 4-phosphate and phosphoenolpyruvate: step 6/7. In terms of biological role, catalyzes the transfer of the enolpyruvyl moiety of phosphoenolpyruvate (PEP) to the 5-hydroxyl of shikimate-3-phosphate (S3P) to produce enolpyruvyl shikimate-3-phosphate and inorganic phosphate. The sequence is that of 3-phosphoshikimate 1-carboxyvinyltransferase from Actinobacillus pleuropneumoniae serotype 5b (strain L20).